We begin with the raw amino-acid sequence, 379 residues long: Adenylosuccinate synthetase (379 aa).

GTP contacts are provided by residues 11–17 and 39–41; these read GDEGKGK and GHT. Asp12 functions as the Proton acceptor in the catalytic mechanism. Mg(2+)-binding residues include Asp12 and Gly39. IMP-binding positions include 12-15, 37-40, Thr127, Arg141, Gln223, Thr238, and Arg302; these read DEGK and NAGH. The Proton donor role is filled by His40. 298–304 contributes to the substrate binding site; sequence TTTGRGR. Residues Arg304 and 330 to 332 each bind GTP; that span reads KLD.

The protein belongs to the adenylosuccinate synthetase family. In terms of assembly, homodimer. Mg(2+) is required as a cofactor.

The protein resides in the cytoplasm. The catalysed reaction is IMP + L-aspartate + GTP = N(6)-(1,2-dicarboxyethyl)-AMP + GDP + phosphate + 2 H(+). It functions in the pathway purine metabolism; AMP biosynthesis via de novo pathway; AMP from IMP: step 1/2. In terms of biological role, plays an important role in the de novo pathway of purine nucleotide biosynthesis. Catalyzes the first committed step in the biosynthesis of AMP from IMP. This chain is Adenylosuccinate synthetase, found in Methanosarcina mazei (strain ATCC BAA-159 / DSM 3647 / Goe1 / Go1 / JCM 11833 / OCM 88) (Methanosarcina frisia).